Reading from the N-terminus, the 212-residue chain is UPF0319 protein PBPRA2789 (212 aa).

An N-terminal signal peptide occupies residues 1-21 (MKKILLAFTLPLVLASQTAMA).

Belongs to the UPF0319 family.

In Photobacterium profundum (strain SS9), this protein is UPF0319 protein PBPRA2789.